The following is a 34-amino-acid chain: Photosystem II reaction center protein Psb30 (34 aa).

A helical transmembrane segment spans residues 6–26; that stretch reads VIGQLVSTGLIGLLGPAVIIL.

This sequence belongs to the Psb30/Ycf12 family. As to quaternary structure, PSII is composed of 1 copy each of membrane proteins PsbA, PsbB, PsbC, PsbD, PsbE, PsbF, PsbH, PsbI, PsbJ, PsbK, PsbL, PsbM, PsbT, PsbX, PsbY, PsbZ, Psb30/Ycf12, peripheral proteins of the oxygen-evolving complex and a large number of cofactors. It forms dimeric complexes.

It localises to the plastid. It is found in the chloroplast thylakoid membrane. In terms of biological role, a core subunit of photosystem II (PSII), probably helps stabilize the reaction center. This chain is Photosystem II reaction center protein Psb30, found in Skeletonema costatum (Marine centric diatom).